Consider the following 25-residue polypeptide: Germin-like protein (25 aa).

This sequence belongs to the germin family.

This is Germin-like protein from Populus euphratica (Euphrates poplar).